Consider the following 743-residue polypeptide: Glycerol-3-phosphate O-acyltransferase 2 (743 aa).

The Lumenal portion of the chain corresponds to 1–34 (MSAPAADHNAAKPIPHVPQASRRYKNSYNGFVYN). The helical transmembrane segment at 35–55 (IHTWLYDVSVFLFNILFTIFF) threads the bilayer. At 56-442 (REIKVRGAYN…TKLEALRCFV (387 aa)) the chain is on the cytoplasmic side. Residues 443 to 457 (TLIVRLIKFSVFAIL) traverse the membrane as a helical segment. A topological domain (lumenal) is located at residue Ser-458. A helical membrane pass occupies residues 459-473 (LPGSILFTPIFIICR). The Cytoplasmic portion of the chain corresponds to 474-501 (VYSEKKAKEGLKKSLVKIKGTDLLATWK). A helical membrane pass occupies residues 502–522 (LIVALILAPILYVTYSILLII). Over 523-531 (LARKQHYCR) the chain is Lumenal. The chain crosses the membrane as a helical span at residues 532-552 (IWVPSNNAFIQFVYFYALLVF). At 553–743 (TTYSSLKTGE…RQKREHEKKE (191 aa)) the chain is on the cytoplasmic side. 9 positions are modified to phosphoserine: Ser-632, Ser-637, Ser-647, Ser-651, Ser-654, Ser-657, Ser-664, Ser-668, and Ser-671. Position 673 is a phosphothreonine (Thr-673). The interval 682–743 (KQGQWKSEGE…RQKREHEKKE (62 aa)) is disordered. Ser-688 carries the phosphoserine modification. The span at 691–700 (ETSEDEDEFD) shows a compositional bias: acidic residues. Phosphothreonine is present on Thr-692. Position 693 is a phosphoserine (Ser-693).

This sequence belongs to the GPAT/DAPAT family. Phosphorylated at a conserved motif involving Ser-664, Ser-668 and Ser-671. This phosphorylation plays a critical role for efficient TAG mobilization. Phosphorylation deficiency at this motif increases the enzyme activity and consequently induces de novo formation of phosphatidic acid.

The protein resides in the lipid droplet. It localises to the endoplasmic reticulum membrane. It carries out the reaction sn-glycerol 3-phosphate + an acyl-CoA = a 1-acyl-sn-glycero-3-phosphate + CoA. The catalysed reaction is dihydroxyacetone phosphate + an acyl-CoA = a 1-acylglycerone 3-phosphate + CoA. It catalyses the reaction sn-glycerol 3-phosphate + hexadecanoyl-CoA = 1-hexadecanoyl-sn-glycero-3-phosphate + CoA. The enzyme catalyses (9Z)-hexadecenoyl-CoA + sn-glycerol 3-phosphate = 1-(9Z-hexadecenoyl)-sn-glycero-3-phosphate + CoA. It carries out the reaction sn-glycerol 3-phosphate + octadecanoyl-CoA = 1-octadecanoyl-sn-glycero-3-phosphate + CoA. The catalysed reaction is sn-glycerol 3-phosphate + (9Z)-octadecenoyl-CoA = 1-(9Z-octadecenoyl)-sn-glycero-3-phosphate + CoA. It participates in phospholipid metabolism; CDP-diacylglycerol biosynthesis; CDP-diacylglycerol from sn-glycerol 3-phosphate: step 1/3. Functionally, dual substrate-specific glycerol-3-phosphate/dihydroxyacetone phosphate sn-1 acyltransferase, catalyzing the first and committed reaction in the de novo synthesis of glycerophospholipids and triacylglycerols (TAGs). Can use both Gly-3-P and dihydroxyacetone phosphate with similar efficiencies and has a broad fatty acyl-CoA specificity profile. Transfers a fatty acid from fatty acyl-CoA to the sn-1 position of glycerol-3-phosphate to produce lysophosphatidic acid (LysoPA). These lipids not only are precursors of glycerolipids, but also are dynamic components of signal transduction systems that control cell physiology. This chain is Glycerol-3-phosphate O-acyltransferase 2 (GPT2), found in Saccharomyces cerevisiae (strain ATCC 204508 / S288c) (Baker's yeast).